Reading from the N-terminus, the 343-residue chain is Ricin B-like lectin R40G2 (343 aa).

Residues 194 to 340 (TVRVFSAAGE…CEGDNQRWKI (147 aa)) enclose the Ricin B-type lectin domain.

Lectin which binds carbohydrates in vitro. Interacts through its lectin domain with glycan structures containing specific motifs. In Oryza sativa subsp. japonica (Rice), this protein is Ricin B-like lectin R40G2.